A 436-amino-acid polypeptide reads, in one-letter code: Trigger factor (436 aa).

The region spanning 161-246 (GDQVIVDFDG…VREVKEPTLP (86 aa)) is the PPIase FKBP-type domain.

Belongs to the FKBP-type PPIase family. Tig subfamily.

The protein resides in the cytoplasm. The catalysed reaction is [protein]-peptidylproline (omega=180) = [protein]-peptidylproline (omega=0). Its function is as follows. Involved in protein export. Acts as a chaperone by maintaining the newly synthesized protein in an open conformation. Functions as a peptidyl-prolyl cis-trans isomerase. In Thioalkalivibrio sulfidiphilus (strain HL-EbGR7), this protein is Trigger factor.